We begin with the raw amino-acid sequence, 118 residues long: Small ribosomal subunit protein uS13 (118 aa).

The disordered stretch occupies residues 92–118; the sequence is RKGLPVRGQRTKTNARTRKGPRKPIRK.

The protein belongs to the universal ribosomal protein uS13 family. In terms of assembly, part of the 30S ribosomal subunit. Forms a loose heterodimer with protein S19. Forms two bridges to the 50S subunit in the 70S ribosome.

Located at the top of the head of the 30S subunit, it contacts several helices of the 16S rRNA. In the 70S ribosome it contacts the 23S rRNA (bridge B1a) and protein L5 of the 50S subunit (bridge B1b), connecting the 2 subunits; these bridges are implicated in subunit movement. Contacts the tRNAs in the A and P-sites. This chain is Small ribosomal subunit protein uS13, found in Pseudomonas putida (strain ATCC 700007 / DSM 6899 / JCM 31910 / BCRC 17059 / LMG 24140 / F1).